We begin with the raw amino-acid sequence, 378 residues long: Chaperone protein DnaJ (378 aa).

One can recognise a J domain in the interval 5–69; that stretch reads EYYDRLGVSK…QKRAAYDQYG (65 aa). Residues 134–216 form a CR-type zinc finger; the sequence is GVEKEVSYNR…CHGTGHEKQA (83 aa). Cys-147, Cys-150, Cys-164, Cys-167, Cys-190, Cys-193, Cys-204, and Cys-207 together coordinate Zn(2+). 4 CXXCXGXG motif repeats span residues 147-154, 164-171, 190-197, and 204-211; these read CGTCLGSG, CRKCHGSG, CDICHGSG, and CQTCHGTG.

Belongs to the DnaJ family. In terms of assembly, homodimer. The cofactor is Zn(2+).

The protein resides in the cytoplasm. Participates actively in the response to hyperosmotic and heat shock by preventing the aggregation of stress-denatured proteins and by disaggregating proteins, also in an autonomous, DnaK-independent fashion. Unfolded proteins bind initially to DnaJ; upon interaction with the DnaJ-bound protein, DnaK hydrolyzes its bound ATP, resulting in the formation of a stable complex. GrpE releases ADP from DnaK; ATP binding to DnaK triggers the release of the substrate protein, thus completing the reaction cycle. Several rounds of ATP-dependent interactions between DnaJ, DnaK and GrpE are required for fully efficient folding. Also involved, together with DnaK and GrpE, in the DNA replication of plasmids through activation of initiation proteins. The polypeptide is Chaperone protein DnaJ (Streptococcus pyogenes serotype M6 (strain ATCC BAA-946 / MGAS10394)).